A 762-amino-acid polypeptide reads, in one-letter code: Chondroadherin-like protein (762 aa).

The N-terminal stretch at 1-30 (MEGPRSSTHVPLVLPLLVLLLLAPARQAAA) is a signal peptide. The LRRNT 1 domain maps to 31-62 (QRCPQACICDNSRRHVACRYQNLTEVPDAIPE). N-linked (GlcNAc...) asparagine glycosylation is present at asparagine 52. LRR repeat units follow at residues 87–108 (HLTH…AFRG), 111–132 (RLLL…ALDG), 135–156 (SLRR…TFGA), 159–180 (ALAT…AFQG), 183–204 (RVRW…ALAG), 207–228 (ALRR…VLSQ), 231–252 (GLAR…DGLA), 255–276 (GLRE…AFAH), and 279–300 (RLHT…QGPG). One can recognise an LRRCT 1 domain in the interval 310–359 (NPLWCGCQARPLLEWLARARVRSDGACQGPRRLRGEALDALRPWDLRCPG). The tract at residues 364–390 (EEEELEERAVAGPRAPPRGPPRGPGEE) is disordered. Positions 377–386 (RAPPRGPPRG) are enriched in pro residues. The 39-residue stretch at 387-425 (PGEERAVAPCPRACVCVPESRHSSCEGCGLQAVPRGFPS) folds into the LRRNT 2 domain. Cysteine 396 and cysteine 411 are disulfide-bonded. 10 LRR repeats span residues 426–447 (DTQL…AFPG), 450–471 (HLVS…ALAG), 474–495 (RLIY…ALEG), 498–519 (RLGY…ALRA), 522–543 (SLFS…DLGR), 546–566 (ALRW…GALG), 570–591 (ELEK…ALEG), 594–615 (ALLE…AFQP), 619–640 (SLQH…AFSG), and 644–665 (GLQS…PSLS). Asparagine 626 carries an N-linked (GlcNAc...) asparagine glycan. An LRRCT 2 domain is found at 675 to 724 (NPFHCDCQLLPLHRWLTGLNLRVGATCATPPNARGQRVKAAAAVFEDCPG). Cystine bridges form between cysteine 679–cysteine 722 and cysteine 681–cysteine 701. Over residues 728 to 745 (RKAKRTPASRPSARRTPI) the composition is skewed to basic residues. The interval 728–762 (RKAKRTPASRPSARRTPIKGRQCGADKVGKEKGRL) is disordered.

The protein belongs to the small leucine-rich proteoglycan (SLRP) family. SLRP class IV subfamily. As to quaternary structure, associates with collagen and binds to collagen fibrils.

It localises to the secreted. The protein localises to the extracellular space. The protein resides in the extracellular matrix. Potential negative modulator of chondrocyte differentiation. Inhibits collagen fibrillogenesis in vitro. May influence chondrocyte's differentiation by acting on its cellular collagenous microenvironment. The protein is Chondroadherin-like protein (CHADL) of Homo sapiens (Human).